Here is a 273-residue protein sequence, read N- to C-terminus: MCPTCPPSAASASSENNNTDNNDHLVLSSDSSHPANLIPALCAKFWTLGWVTGTGGGASIRDNDLVYLAPSGVQKELMKPEDIYVLSLAAQATSPNPKQRVYLRSPANYKPSQCTPLFLAAFTKRNAGCCIHTHSHWAVLVTLLLERERSSKEGDEEKGKVFEINNIEQIKGFGRGFGKSGNLGYHDTLRIPVIENTAHEEDLTEFLEEAMDKYPDTYAVLVRRHGVYVWGENVHKAKTMCESLDYLFQLAVEMKQLGLPWITDIEPTIPTRK.

The disordered stretch occupies residues 1-27 (MCPTCPPSAASASSENNNTDNNDHLVL). Residue C114 participates in substrate binding. Positions 132 and 134 each coordinate Zn(2+). E168 (proton donor/acceptor) is an active-site residue. H225 is a binding site for Zn(2+).

It belongs to the aldolase class II family. MtnB subfamily. Zn(2+) serves as cofactor.

Its subcellular location is the cytoplasm. The catalysed reaction is 5-(methylsulfanyl)-D-ribulose 1-phosphate = 5-methylsulfanyl-2,3-dioxopentyl phosphate + H2O. The protein operates within amino-acid biosynthesis; L-methionine biosynthesis via salvage pathway; L-methionine from S-methyl-5-thio-alpha-D-ribose 1-phosphate: step 2/6. Its function is as follows. Catalyzes the dehydration of methylthioribulose-1-phosphate (MTRu-1-P) into 2,3-diketo-5-methylthiopentyl-1-phosphate (DK-MTP-1-P). This chain is Methylthioribulose-1-phosphate dehydratase, found in Sordaria macrospora (strain ATCC MYA-333 / DSM 997 / K(L3346) / K-hell).